Consider the following 100-residue polypeptide: Urease subunit gamma (100 aa).

The protein belongs to the urease gamma subunit family. In terms of assembly, heterotrimer of UreA (gamma), UreB (beta) and UreC (alpha) subunits. Three heterotrimers associate to form the active enzyme. Although not discussed in the published references, Met-1 is represented in the submitted PDB entries as being modified by either a formyl, a carboxyl, or an acetyl group. The N-terminal is probably N-(dihydroxymethyl)methionine, the hydrated form of N-formylmethionine.

Its subcellular location is the cytoplasm. The catalysed reaction is urea + 2 H2O + H(+) = hydrogencarbonate + 2 NH4(+). It functions in the pathway nitrogen metabolism; urea degradation; CO(2) and NH(3) from urea (urease route): step 1/1. The polypeptide is Urease subunit gamma (Sporosarcina pasteurii (Bacillus pasteurii)).